Reading from the N-terminus, the 266-residue chain is MTYRILITNDDGVASPGLMAVYEAVRSLGEAVIVAPASQQSAVGRSMTLFEPLRIEKMNLQGTMAYAVNGTPTDSVIMGMYVVMADRKPDLVISGINIGENLSAEAVTTSGTIGAAMEAANQGVPAIAVSMHVLEEADKFATAAMAQDYAVAQRLIGKLARQVLENGLPEGVDLLNVNIPAGATPETPVVVTRLARRMYDTIVHHRMDPRGRSYYWVDGTIVADAPEGTDLHTVHQRRQVSITPLRLDMTACEQTVEIERIIRDNW.

A divalent metal cation-binding residues include Asp-10, Asp-11, Ser-41, and Asn-97.

It belongs to the SurE nucleotidase family. It depends on a divalent metal cation as a cofactor.

Its subcellular location is the cytoplasm. The enzyme catalyses a ribonucleoside 5'-phosphate + H2O = a ribonucleoside + phosphate. Its function is as follows. Nucleotidase that shows phosphatase activity on nucleoside 5'-monophosphates. The polypeptide is 5'-nucleotidase SurE (Methanocella arvoryzae (strain DSM 22066 / NBRC 105507 / MRE50)).